Reading from the N-terminus, the 379-residue chain is Homoserine O-succinyltransferase (379 aa).

One can recognise an AB hydrolase-1 domain in the interval 51-360 (NAVLICHALS…DAPQGHDAFL (310 aa)). Ser157 serves as the catalytic Nucleophile. A substrate-binding site is contributed by Arg227. Residues Asp323 and His356 contribute to the active site. A substrate-binding site is contributed by Asp357.

The protein belongs to the AB hydrolase superfamily. MetX family. In terms of assembly, homodimer.

It localises to the cytoplasm. It catalyses the reaction L-homoserine + succinyl-CoA = O-succinyl-L-homoserine + CoA. Its pathway is amino-acid biosynthesis; L-methionine biosynthesis via de novo pathway; O-succinyl-L-homoserine from L-homoserine: step 1/1. Transfers a succinyl group from succinyl-CoA to L-homoserine, forming succinyl-L-homoserine. The chain is Homoserine O-succinyltransferase from Pseudomonas fluorescens (strain SBW25).